Consider the following 406-residue polypeptide: Anthranilate 1,2-dioxygenase system ferredoxin--NAD(+) reductase component (406 aa).

5-37 serves as a coordination point for FAD; the sequence is PFVIVGAGHAARRTAEALRARDADAPIVMIGAE. Residue 152–161 coordinates NAD(+); that stretch reads GGGFIGLEVA.

Belongs to the FAD-dependent oxidoreductase family. As to quaternary structure, part of a multicomponent enzyme system composed of a reductase (AndAa), a ferredoxin (AndAb) and a two-subunit oxygenase component (AndAc and AndAd). Requires FAD as cofactor.

The enzyme catalyses 2 reduced [2Fe-2S]-[ferredoxin] + NAD(+) + H(+) = 2 oxidized [2Fe-2S]-[ferredoxin] + NADH. It functions in the pathway aromatic compound metabolism; anthranilate degradation via hydroxylation; catechol from anthranilate: step 1/1. Part of the multicomponent anthranilate dioxygenase, that converts anthranilate to catechol. Probably transfers electrons from ferredoxin (AndAb) to NADH. This Burkholderia cepacia (Pseudomonas cepacia) protein is Anthranilate 1,2-dioxygenase system ferredoxin--NAD(+) reductase component.